Here is a 141-residue protein sequence, read N- to C-terminus: Large ribosomal subunit protein uL13 (141 aa).

This sequence belongs to the universal ribosomal protein uL13 family. In terms of assembly, part of the 50S ribosomal subunit.

Its function is as follows. This protein is one of the early assembly proteins of the 50S ribosomal subunit, although it is not seen to bind rRNA by itself. It is important during the early stages of 50S assembly. This is Large ribosomal subunit protein uL13 from Helicobacter pylori (strain P12).